The sequence spans 179 residues: RNA pyrophosphohydrolase (179 aa).

Residues glycine 6–lysine 149 form the Nudix hydrolase domain. Positions glycine 38–glycine 59 match the Nudix box motif.

The protein belongs to the Nudix hydrolase family. RppH subfamily. The cofactor is a divalent metal cation.

Functionally, accelerates the degradation of transcripts by removing pyrophosphate from the 5'-end of triphosphorylated RNA, leading to a more labile monophosphorylated state that can stimulate subsequent ribonuclease cleavage. The chain is RNA pyrophosphohydrolase from Ruthia magnifica subsp. Calyptogena magnifica.